The following is a 65-amino-acid chain: Pancreatic polypeptide prohormone (65 aa).

Position 36 is a tyrosine amide (Tyr-36). Positions 59–65 are excised as a propeptide; the sequence is ELSPMGA.

It belongs to the NPY family.

It is found in the secreted. Hormone secreted by pancreatic cells that acts as a regulator of pancreatic and gastrointestinal functions probably by signaling through the G protein-coupled receptor NPY4R2. The protein is Pancreatic polypeptide prohormone (PPY) of Sus scrofa (Pig).